Reading from the N-terminus, the 255-residue chain is uncharacterized protein (255 aa).

This is an uncharacterized protein from Bacillus subtilis (strain 168).